The primary structure comprises 262 residues: TLC domain-containing protein 4-B (262 aa).

The next 6 membrane-spanning stretches (helical) occupy residues Pro6–Gly26, Thr53–Asp73, Leu90–Trp110, His122–Gly142, Gly177–Gly197, and Ala218–Ala238. Residues Arg44–Tyr246 form the TLC domain.

It belongs to the TLCD4 family.

Its subcellular location is the membrane. The protein is TLC domain-containing protein 4-B (tlcd4-b) of Xenopus laevis (African clawed frog).